A 271-amino-acid polypeptide reads, in one-letter code: Putative phosphoenolpyruvate synthase regulatory protein (271 aa).

151–158 provides a ligand contact to ADP; it reads GVSRSGKT.

The protein belongs to the pyruvate, phosphate/water dikinase regulatory protein family. PSRP subfamily.

It catalyses the reaction [pyruvate, water dikinase] + ADP = [pyruvate, water dikinase]-phosphate + AMP + H(+). The enzyme catalyses [pyruvate, water dikinase]-phosphate + phosphate + H(+) = [pyruvate, water dikinase] + diphosphate. In terms of biological role, bifunctional serine/threonine kinase and phosphorylase involved in the regulation of the phosphoenolpyruvate synthase (PEPS) by catalyzing its phosphorylation/dephosphorylation. The sequence is that of Putative phosphoenolpyruvate synthase regulatory protein from Burkholderia lata (strain ATCC 17760 / DSM 23089 / LMG 22485 / NCIMB 9086 / R18194 / 383).